Reading from the N-terminus, the 470-residue chain is Sorting nexin-17 (470 aa).

The region spanning 1–109 is the PX domain; sequence MHFSIPETES…SFLRRAQQET (109 aa). 4 residues coordinate a 1,2-diacyl-sn-glycero-3-phospho-(1D-myo-inositol-3-phosphate): R36, S38, K62, and R75. Residues 115-206 form the Ras-associating domain; sequence EEVSLEVLLS…YKIVLRKSYW (92 aa). Residues 115–432 form an FERM-like region; sequence EEVSLEVLLS…DASRESMVKL (318 aa). The interval 270 to 432 is PTB-like F3 module; the sequence is GYLRFDACVA…DASRESMVKL (163 aa). Phosphoserine occurs at positions 336, 407, 409, 415, 421, 437, and 440. The interval 400–426 is disordered; it reads VGGTLRRSDSQQAVKSPPLLESPDASR.

The protein belongs to the sorting nexin family. In terms of assembly, monomer. Interacts with APP (via cytoplasmic YXNPXY motif). Interacts with KIF1B. Interacts with the C-termini of P-selectin, PTC, LDLR, VLDLR, LRP1 and LRP8. Interacts with KRIT1 (via N-terminus). Interacts with HRAS. Interacts with ITGB1 and ITGB5 (via NPxY motif). Interacts with CCDC22 and CCDC93; the interaction associates SNX17 with the CCC complex. Interacts (via C-terminus) with VPS26C and VPS35L; the interactions are direct and associate SNX17 with the retriever complex.

The protein resides in the cytoplasm. It is found in the early endosome. The protein localises to the cytoplasmic vesicle membrane. Critical regulator of endosomal recycling of numerous surface proteins, including integrins, signaling receptor and channels. Binds to NPxY sequences in the cytoplasmic tails of target cargos. Associates with retriever and CCC complexes to prevent lysosomal degradation and promote cell surface recycling of numerous cargos such as integrins ITGB1, ITGB5 and their associated alpha subunits. Also required for maintenance of normal cell surface levels of APP and LRP1. Interacts with membranes containing phosphatidylinositol 3-phosphate (PtdIns(3P)). This is Sorting nexin-17 (SNX17) from Bos taurus (Bovine).